Reading from the N-terminus, the 328-residue chain is Fructose-1,6-bisphosphatase class 1 (328 aa).

E91, D110, L112, and D113 together coordinate Mg(2+). Substrate is bound by residues 113–116 (DGSS), N205, and 257–259 (YLY). E277 contacts Mg(2+).

Belongs to the FBPase class 1 family. Homotetramer. The cofactor is Mg(2+).

Its subcellular location is the cytoplasm. It catalyses the reaction beta-D-fructose 1,6-bisphosphate + H2O = beta-D-fructose 6-phosphate + phosphate. Its pathway is carbohydrate biosynthesis; gluconeogenesis. The chain is Fructose-1,6-bisphosphatase class 1 from Azorhizobium caulinodans (strain ATCC 43989 / DSM 5975 / JCM 20966 / LMG 6465 / NBRC 14845 / NCIMB 13405 / ORS 571).